Here is a 379-residue protein sequence, read N- to C-terminus: MHVTQEQVMMRKMVRDFARKEIAPAAEIMEKTDEFPFQLIKKMGKHGLMGIPVPEQYGGAGADVVSYILAIHEISRISAAVGVILSVHTSVGTNPILYFGNEEQKMKYIPNLASGDHLGAFALTEPHSGSDAGSLRTTAIKKNGKYLLNGSKIFITNGGAADIYITFALTAPDQGRHGISAFIVEKNTPGFTVGKKERKLGLYGSNTTELIFDNAEVPEANLLGKEGDGFHIAMANLNVGRIGIAAQALGIAEAALEHAVDYAKQRVQFGRPIAANQGISFKLADMATRAEAARHLVYHAADLHNRGLNCGKEASMAKQFASDAAVKAALDAVQIYGGYGYMKDYPVERLLRDAKVTQIYEGTNEIQRLIISKYLLGGT.

This sequence belongs to the acyl-CoA dehydrogenase family. It depends on FAD as a cofactor.

It catalyses the reaction a 2,3-saturated acyl-CoA + A = a 2,3-dehydroacyl-CoA + AH2. The sequence is that of Acyl-CoA dehydrogenase (mmgC) from Bacillus subtilis (strain 168).